The sequence spans 311 residues: MFKFILKRIALMFPLVIVVSFMTFLLTYITNENPAVTILHAQGTPNVTPELIAETNEKYGFNDPLLIQYKNWLLEAMQFNFGTSYITGDPVAERIGPAFMNTLKLTIISSVMVMITSIILGVVSALKRGKFTDRAIRSVAFFLTALPSYWIASILIIYVSVKLNILPTSGLTGPESYILPVIVITIAYAGIYFRNVRRSMVEQLNEDYVLYLRASGVKSITLMLHVLRNAIQVAVSIFCMSIPMIMGGLVVIEYIFAWPGLGQLSLKAILEHDFPVIQAYVLIVAVLFIVFNTLADIINALLNPRLREGAR.

6 helical membrane passes run 9–29 (IALM…LTYI), 105–125 (LTII…VVSA), 139–159 (VAFF…IIYV), 173–193 (GPES…GIYF), 237–257 (IFCM…YIFA), and 274–294 (FPVI…FNTL). Residues 99–295 (FMNTLKLTII…VLFIVFNTLA (197 aa)) form the ABC transmembrane type-1 domain.

This sequence belongs to the binding-protein-dependent transport system permease family. As to quaternary structure, the complex is composed of two ATP-binding proteins (CntD and CntF), two transmembrane proteins (CntB and CntC) and a solute-binding protein (CntA).

It localises to the cell membrane. Functionally, part of the ABC transporter complex CntABCDF (Opp1) involved in the uptake of metal in complex with the metallophore staphylopine (StP). May be involved in the import of a large array of divalent metals ions such as nickel, cobalt, zinc, copper and iron. Probably responsible for the translocation of the substrate across the membrane. The polypeptide is Metal-staphylopine import system permease protein CntB (Staphylococcus aureus (strain Mu50 / ATCC 700699)).